We begin with the raw amino-acid sequence, 683 residues long: DNA polymerase alpha-associated DNA helicase A (683 aa).

229 to 236 (GPPGTGKT) contacts ATP.

This sequence belongs to the DNA2/NAM7 helicase family. In terms of assembly, associates with the hexameric DNA polymerase alpha.

It localises to the cytoplasm. Its subcellular location is the nucleus. It carries out the reaction ATP + H2O = ADP + phosphate + H(+). Its function is as follows. DNA polymerase alpha-associated DNA helicase which may be involved in DNA replication. The chain is DNA polymerase alpha-associated DNA helicase A (HCS1) from Saccharomyces cerevisiae (strain ATCC 204508 / S288c) (Baker's yeast).